Consider the following 331-residue polypeptide: 4-hydroxythreonine-4-phosphate dehydrogenase (331 aa).

Residues H137 and T138 each contribute to the substrate site. H167, H212, and H267 together coordinate a divalent metal cation. 3 residues coordinate substrate: K275, N284, and R293.

This sequence belongs to the PdxA family. In terms of assembly, homodimer. The cofactor is Zn(2+). Requires Mg(2+) as cofactor. Co(2+) is required as a cofactor.

It localises to the cytoplasm. It carries out the reaction 4-(phosphooxy)-L-threonine + NAD(+) = 3-amino-2-oxopropyl phosphate + CO2 + NADH. It participates in cofactor biosynthesis; pyridoxine 5'-phosphate biosynthesis; pyridoxine 5'-phosphate from D-erythrose 4-phosphate: step 4/5. Functionally, catalyzes the NAD(P)-dependent oxidation of 4-(phosphooxy)-L-threonine (HTP) into 2-amino-3-oxo-4-(phosphooxy)butyric acid which spontaneously decarboxylates to form 3-amino-2-oxopropyl phosphate (AHAP). The polypeptide is 4-hydroxythreonine-4-phosphate dehydrogenase (Yersinia pestis bv. Antiqua (strain Angola)).